Reading from the N-terminus, the 321-residue chain is Lipoyl synthase (321 aa).

Residues Cys-68, Cys-73, Cys-79, Cys-94, Cys-98, Cys-101, and Ser-308 each contribute to the [4Fe-4S] cluster site. The 218-residue stretch at 80–297 (FNHGTATFMI…KVLADELGFT (218 aa)) folds into the Radical SAM core domain.

This sequence belongs to the radical SAM superfamily. Lipoyl synthase family. Requires [4Fe-4S] cluster as cofactor.

It is found in the cytoplasm. The catalysed reaction is [[Fe-S] cluster scaffold protein carrying a second [4Fe-4S](2+) cluster] + N(6)-octanoyl-L-lysyl-[protein] + 2 oxidized [2Fe-2S]-[ferredoxin] + 2 S-adenosyl-L-methionine + 4 H(+) = [[Fe-S] cluster scaffold protein] + N(6)-[(R)-dihydrolipoyl]-L-lysyl-[protein] + 4 Fe(3+) + 2 hydrogen sulfide + 2 5'-deoxyadenosine + 2 L-methionine + 2 reduced [2Fe-2S]-[ferredoxin]. Its pathway is protein modification; protein lipoylation via endogenous pathway; protein N(6)-(lipoyl)lysine from octanoyl-[acyl-carrier-protein]: step 2/2. Its function is as follows. Catalyzes the radical-mediated insertion of two sulfur atoms into the C-6 and C-8 positions of the octanoyl moiety bound to the lipoyl domains of lipoate-dependent enzymes, thereby converting the octanoylated domains into lipoylated derivatives. The sequence is that of Lipoyl synthase from Shewanella denitrificans (strain OS217 / ATCC BAA-1090 / DSM 15013).